A 956-amino-acid chain; its full sequence is MEAGGLPLELWRMILAYLHLPDLGRCSLVCRAWYELILSLDSTRWRQLCLGCTECRHPNWPNQPDVEPESWREAFKQHYLASKTWTKNALDLESSICFSLFRRRRERRTLSVGPGREFDSLGSALAMASLYDRIVLFPGVYEEQGEIILKVPVEIVGQGKLGEVALLASIDQHCSTTRLCNLVFTPAWFSPIMYKTTSGHVQFDNCNFENGHIQVHGPGTCQVKFCTFKNTHIFLHNVPLCVLENCEFVGSENNSVTVEGHPSADKNWAYKYLLGLIKSSPTFLPTEDSDFLMSLDLESRDQAWSPKTCDIVIEGSQSPTSPASSSPKPGSKAGSQEAEVGSDGERVAQTPDSSDGGLSPSGEDEDEDQLMYRLSYQVQGPRPVLGGSFLGPPLPGASIQLPSCLVLNSLQQELQKDKEAMALANSVQGCLIRKCLFRDGKGGVFVCSHGRAKMEGNIFRNLTYAVRCIHNSKIIMLRNDIYRCRASGIFLRLEGGGLIAGNNIYHNAEAGVDIRKKSNPLILCNQIHHGLRSGIVVLGNGKGIIRNNQIFSNKEAGIYILYHGNPVVSGNHIFKGRAAGIAVNENGKGLITENVIRENQWGGVDIRRGGIPVLRSNLICFGYSDGVVVGDEGKGLIEGNTIYANKGCGVWMMSSSLPHVTSNHVSYNGLYGVAVFSQKDGSSELPRGHRAQENFSEDGDAILWETELEKEDDPLRRPITIALVESNSINHNGASGLYVQSSEALHVITNVIHANGDRGITVAQSSQPTRVANNSISCNRQSGVKVEAQCKVELRGNGIYDNRGHGIITKGDSTIVIENDIIGNRGSGLQLLPRSDTKVIKNRIHSFRAYGIAVRGRAKALVQENIIFQGKTSKTIFQQISNNRECIMQNNKFLVFKKKSDTWRLVNPPARPHLENSLRRPSAAHNGQKVTAMATRITARVEGGYHSNRSVFCTIL.

The F-box domain occupies Met-1–Leu-48. 2 PbH1 repeats span residues Ser-198–Gly-217 and Val-238–Gly-260. A disordered region spans residues Glu-314–Glu-367. Low complexity-rich tracts occupy residues Ser-316–Gln-336 and Pro-351–Ser-361. Residues Ser-321 and Ser-326 each carry the phosphoserine modification. 15 PbH1 repeats span residues Val-427–Ser-448, His-449–His-470, Asn-471–Leu-493, Glu-494–Lys-516, Leu-538–Ile-560, Leu-561–Val-583, Asn-584–Ile-606, Arg-607–Val-629, Gly-630–Met-652, Met-653–Val-675, Arg-717–Val-739, Gln-740–Val-762, Gln-764–Val-786, Glu-787–Thr-809, and Leu-832–Val-854.

As to quaternary structure, component of the SCF(FBXO10) complex consisting of CUL1, SKP1 and FBXO10. Interacts with BCL2. Interacts with PRDM1.

It is found in the cytoplasm. Its pathway is protein modification; protein ubiquitination. Functionally, substrate-recognition component of the SCF (SKP1-CUL1-F-box protein)-type E3 ubiquitin ligase complex. Mediates the ubiquitination and degradation of BCL2, an antiapoptotic protein, thereby playing a role in apoptosis by controlling the stability of BCL2. Targets also the receptor for advanced glycation end products RAGE for ubiquitination and subsequent lysosomal degradation. Directly controls HGAL/GCSAM ubiquitination and degradation and thereby decreases BCR signaling. This is F-box only protein 10 (FBXO10) from Homo sapiens (Human).